The sequence spans 322 residues: Homoserine kinase (322 aa).

106 to 116 (ALSSGMGGSAA) is an ATP binding site.

Belongs to the GHMP kinase family. Homoserine kinase subfamily.

It localises to the cytoplasm. It carries out the reaction L-homoserine + ATP = O-phospho-L-homoserine + ADP + H(+). The protein operates within amino-acid biosynthesis; L-threonine biosynthesis; L-threonine from L-aspartate: step 4/5. Functionally, catalyzes the ATP-dependent phosphorylation of L-homoserine to L-homoserine phosphate. The polypeptide is Homoserine kinase (Xanthomonas campestris pv. campestris (strain B100)).